The chain runs to 362 residues: Anthranilate phosphoribosyltransferase (362 aa).

5-phospho-alpha-D-ribose 1-diphosphate contacts are provided by residues G96, 99 to 100 (GD), T104, 106 to 109 (NIST), 124 to 132 (KHGNRAASS), and G136. Residue G96 participates in anthranilate binding. S108 contributes to the Mg(2+) binding site. N127 serves as a coordination point for anthranilate. R182 serves as a coordination point for anthranilate. Positions 240 and 241 each coordinate Mg(2+).

Belongs to the anthranilate phosphoribosyltransferase family. In terms of assembly, homodimer. Mg(2+) serves as cofactor.

It catalyses the reaction N-(5-phospho-beta-D-ribosyl)anthranilate + diphosphate = 5-phospho-alpha-D-ribose 1-diphosphate + anthranilate. Its pathway is amino-acid biosynthesis; L-tryptophan biosynthesis; L-tryptophan from chorismate: step 2/5. Its function is as follows. Catalyzes the transfer of the phosphoribosyl group of 5-phosphorylribose-1-pyrophosphate (PRPP) to anthranilate to yield N-(5'-phosphoribosyl)-anthranilate (PRA). The chain is Anthranilate phosphoribosyltransferase from Rhodococcus jostii (strain RHA1).